Here is a 266-residue protein sequence, read N- to C-terminus: Decarboxylase tropJ (266 aa).

Glu-80 serves as the catalytic Proton acceptor. The Zn(2+) site is built by Glu-80, His-99, His-101, and His-180.

The protein belongs to the aldolase class II family. The cofactor is Zn(2+).

The protein operates within secondary metabolite biosynthesis. Its function is as follows. Decarboxylase; part of the gene cluster that mediates the biosynthesis of the tropolone class of fungal maleic anhydrides. The pathway begins with the synthesis of 3-methylorcinaldehyde by the non-reducing polyketide synthase (PKS) tropA. 3-methylorcinaldehyde is the substrate for the FAD-dependent monooxygenase tropB to yield a dearomatized hydroxycyclohexadione. The 2-oxoglutarate-dependent dioxygenase tropC then performs the oxidative ring expansion to provide the first tropolone metabolite stipitaldehyde. Trop D converts stipitaldehyde into stipitacetal which is in turn converted to stipitalide by the short-chain dehydrogenase/reductase tropE. The next steps involve tropF, tropG, tropH, tropI and tropJ to form successive tropolone maleic anhydrides including stipitaldehydic, stipitatonic and stipitatic acids. This Talaromyces stipitatus (strain ATCC 10500 / CBS 375.48 / QM 6759 / NRRL 1006) (Penicillium stipitatum) protein is Decarboxylase tropJ.